The sequence spans 246 residues: U11/U12 small nuclear ribonucleoprotein 35 kDa protein (246 aa).

Residues 51-129 (LTLFVARLNL…HEIFVDYELE (79 aa)) form the RRM domain. Lys172 is covalently cross-linked (Glycyl lysine isopeptide (Lys-Gly) (interchain with G-Cter in SUMO2)). The segment at 187 to 217 (SRSRERHWDSRTRDRDHDRGREKRWQEREPT) is disordered. Basic and acidic residues predominate over residues 192 to 217 (RHWDSRTRDRDHDRGREKRWQEREPT).

As to quaternary structure, component of the U11/U12 snRNPs that are part of the U12-type spliceosome. As to expression, expressed in heart, liver, skeletal muscle and pancreas.

The protein localises to the nucleus. The polypeptide is U11/U12 small nuclear ribonucleoprotein 35 kDa protein (SNRNP35) (Homo sapiens (Human)).